A 78-amino-acid polypeptide reads, in one-letter code: Teretoxin Tsu6.15 (78 aa).

An N-terminal signal peptide occupies residues 1-21 (MATSGRLLCFCLVLGLVFESL). Positions 22-47 (GYSEARPPRDRKRTVTAKRYDPLAQR) are excised as a propeptide.

The protein belongs to the teretoxin M (TM) superfamily. Post-translationally, contains 3 disulfide bonds. As to expression, expressed by the venom duct.

The protein resides in the secreted. In Terebra subulata (Chocolate spotted auger), this protein is Teretoxin Tsu6.15.